An 884-amino-acid polypeptide reads, in one-letter code: Blastomere cadherin (884 aa).

Residues 1-26 form the signal peptide; the sequence is MGGTDKFRYPSVWLCGLLCLLQVVPS. Positions 27–157 are excised as a propeptide; the sequence is INVDVSGCQP…KHTGLKRKKR (131 aa). Cadherin domains follow at residues 158–265, 266–378, 379–489, 490–595, and 596–706; these read DWVI…RPKF, TQPV…APIF, DPKT…APVF, VPVV…DNGP, and VPSP…GFDL. At 158–706 the chain is on the extracellular side; sequence DWVIPPIKVS…QEKLVAGFDL (549 aa). N-linked (GlcNAc...) asparagine glycosylation is found at Asn427, Asn560, and Asn683. Residues 707 to 730 traverse the membrane as a helical segment; it reads PIILVILGSILALLILSLLLLLFL. The Cytoplasmic segment spans residues 731-884; it reads KRKKVVKEPL…YGGDDDDDEE (154 aa).

As to expression, expressed in pituitary gland, lung and kidney.

The protein localises to the cell membrane. Functionally, cadherins are calcium-dependent cell adhesion proteins. They preferentially interact with themselves in a homophilic manner in connecting cells; cadherins may thus contribute to the sorting of heterogeneous cell types. This chain is Blastomere cadherin, found in Xenopus laevis (African clawed frog).